Consider the following 359-residue polypeptide: 3-dehydroquinate synthase (359 aa).

NAD(+) is bound by residues 71 to 76, 105 to 109, 129 to 130, Lys-142, Lys-151, and 169 to 172; these read DGEQFK, GVIGD, TT, and CLQT. Zn(2+)-binding residues include Glu-184, His-247, and His-264.

The protein belongs to the sugar phosphate cyclases superfamily. Dehydroquinate synthase family. Requires Co(2+) as cofactor. The cofactor is Zn(2+). NAD(+) is required as a cofactor.

The protein localises to the cytoplasm. It catalyses the reaction 7-phospho-2-dehydro-3-deoxy-D-arabino-heptonate = 3-dehydroquinate + phosphate. It participates in metabolic intermediate biosynthesis; chorismate biosynthesis; chorismate from D-erythrose 4-phosphate and phosphoenolpyruvate: step 2/7. In terms of biological role, catalyzes the conversion of 3-deoxy-D-arabino-heptulosonate 7-phosphate (DAHP) to dehydroquinate (DHQ). This is 3-dehydroquinate synthase from Shewanella sp. (strain ANA-3).